A 309-amino-acid chain; its full sequence is Probable ABC transporter permease protein YesP (309 aa).

The next 6 helical transmembrane spans lie at 29–49 (FIIG…FLSF), 84–104 (FTYV…IAVI), 114–134 (IYRT…VAIM), 167–187 (ALWT…LIFL), 217–237 (LPIL…SAFM), and 275–295 (YASA…LILF). The ABC transmembrane type-1 domain maps to 80–294 (LKVTFTYVLA…VIVGLITLIL (215 aa)).

The protein belongs to the binding-protein-dependent transport system permease family. MalFG subfamily.

Its subcellular location is the cell membrane. Part of a binding-protein-dependent transport system. Probably responsible for the translocation of the substrate across the membrane. The sequence is that of Probable ABC transporter permease protein YesP (yesP) from Bacillus subtilis (strain 168).